Here is a 375-residue protein sequence, read N- to C-terminus: Ubl carboxyl-terminal hydrolase 18 (375 aa).

The tract at residues 18–45 is disordered; the sequence is ESPQSPADLEEKKEEDSNMKREQPRERP. Over residues 26 to 45 the composition is skewed to basic and acidic residues; that stretch reads LEEKKEEDSNMKREQPRERP. Positions 55 to 373 constitute a USP domain; sequence VGLHNIGQTC…TAYLLVYMKM (319 aa). C64 serves as the catalytic Nucleophile. H321 (proton acceptor) is an active-site residue.

This sequence belongs to the peptidase C19 family. Interacts with STAT2; the interaction is direct. Interacts with IFNAR2; indirectly via STAT2, it negatively regulates the assembly of the ternary interferon-IFNAR1-IFNAR2 complex and inhibits type I interferon signaling. Interacts with STING1. Interacts with USP20.

It catalyses the reaction Thiol-dependent hydrolysis of ester, thioester, amide, peptide and isopeptide bonds formed by the C-terminal Gly of ubiquitin (a 76-residue protein attached to proteins as an intracellular targeting signal).. Functionally, interferon-induced ISG15-specific protease that plays a crucial role for maintaining a proper balance of ISG15-conjugated proteins in cells. Regulates protein ISGylation by efficiently cleaving ISG15 conjugates linked via isopeptide bonds. Regulates T-cell activation and T-helper 17 (Th17) cell differentiation by deubiquitinating TAK1, likely to keep TAK1-TAB complexes in steady conditions. In turn, restricts activation of NF-kappa-B, NFAT, and JNK as well as expression of IL2 in T-cells after TCR activation. Acts as a molecular adapter with USP20 to promote innate antiviral response through deubiquitinating STING1. Involved also in the negative regulation of the inflammatory response triggered by type I interferon. Upon recruitment by STAT2 to the type I interferon receptor subunit IFNAR2 interferes with the assembly of the ternary interferon-IFNAR1-IFNAR2 complex and acts as a negative regulator of the type I interferon signaling pathway. This is Ubl carboxyl-terminal hydrolase 18 (USP18) from Pongo abelii (Sumatran orangutan).